The sequence spans 332 residues: Probable isoaspartyl peptidase/L-asparaginase CG7860 (332 aa).

Residue Thr188 is the Nucleophile of the active site. Residues 216–219 (RIGD) and 239–242 (TGHG) contribute to the substrate site.

Belongs to the Ntn-hydrolase family. As to quaternary structure, heterodimer of an alpha and beta chain produced by autocleavage. Cleaved into an alpha and beta chain by autocatalysis; this activates the enzyme. The N-terminal residue of the beta subunit is responsible for the nucleophile hydrolase activity.

It carries out the reaction L-asparagine + H2O = L-aspartate + NH4(+). The catalysed reaction is Cleavage of a beta-linked Asp residue from the N-terminus of a polypeptide.. Its function is as follows. Has both L-asparaginase and beta-aspartyl peptidase activity. Does not have aspartylglucosaminidase activity and is inactive toward GlcNAc-L-Asn. Likewise, has no activity toward glutamine. The chain is Probable isoaspartyl peptidase/L-asparaginase CG7860 from Drosophila melanogaster (Fruit fly).